Reading from the N-terminus, the 58-residue chain is ATP synthase F(0) complex subunit k, mitochondrial (58 aa).

Residues lysine 16 and lysine 17 each carry the N6-acetyllysine modification. The chain crosses the membrane as a helical span at residues 23–45 (TLTGRMNCVLATYGSIALIVLYF).

Component of the ATP synthase complex composed at least of ATP5F1A/subunit alpha, ATP5F1B/subunit beta, ATP5MC1/subunit c (homooctomer), MT-ATP6/subunit a, MT-ATP8/subunit 8, ATP5ME/subunit e, ATP5MF/subunit f, ATP5MG/subunit g, ATP5MK/subunit k, ATP5MJ/subunit j, ATP5F1C/subunit gamma, ATP5F1D/subunit delta, ATP5F1E/subunit epsilon, ATP5PF/subunit F6, ATP5PB/subunit b, ATP5PD/subunit d, ATP5PO/subunit OSCP. ATP synthase complex consists of a soluble F(1) head domain (subunits alpha(3) and beta(3)) - the catalytic core - and a membrane F(0) domain - the membrane proton channel (subunits c, a, 8, e, f, g, k and j). These two domains are linked by a central stalk (subunits gamma, delta, and epsilon) rotating inside the F1 region and a stationary peripheral stalk (subunits F6, b, d, and OSCP). The ATP synthase complex/complex V exists as a monomeric and a dimeric supercomplex that helps shape mitochondrial cristae to optimize proton flow.

Its subcellular location is the mitochondrion membrane. Subunit k, of the mitochondrial membrane ATP synthase complex (F(1)F(0) ATP synthase or Complex V) that produces ATP from ADP in the presence of a proton gradient across the membrane which is generated by electron transport complexes of the respiratory chain. ATP synthase complex consist of a soluble F(1) head domain - the catalytic core - and a membrane F(1) domain - the membrane proton channel. These two domains are linked by a central stalk rotating inside the F(1) region and a stationary peripheral stalk. During catalysis, ATP synthesis in the catalytic domain of F(1) is coupled via a rotary mechanism of the central stalk subunits to proton translocation. In vivo, can only synthesize ATP although its ATP hydrolase activity can be activated artificially in vitro. Part of the complex F(0) domain. Required for dimerization of the ATP synthase complex and as such regulates ATP synthesis in the mitochondria. The protein is ATP synthase F(0) complex subunit k, mitochondrial of Homo sapiens (Human).